The chain runs to 500 residues: uncharacterized protein (500 aa).

This is an uncharacterized protein from Halorubrum sp. PV6 (HRPV-1).